The primary structure comprises 547 residues: Phosphomethylpyrimidine synthase (547 aa).

Residues 1 to 15 (MTETLSKTTEPSVTT) show a composition bias toward polar residues. The tract at residues 1-36 (MTETLSKTTEPSVTTGPIPGSSKAYREVANPDGGPS) is disordered. Residues N150, M179, Y208, H244, 264 to 266 (SRG), 305 to 308 (DGLR), and E344 each bind substrate. H348 lines the Zn(2+) pocket. A substrate-binding site is contributed by Y371. H412 provides a ligand contact to Zn(2+). C492, C495, and C500 together coordinate [4Fe-4S] cluster.

This sequence belongs to the ThiC family. Requires [4Fe-4S] cluster as cofactor.

The enzyme catalyses 5-amino-1-(5-phospho-beta-D-ribosyl)imidazole + S-adenosyl-L-methionine = 4-amino-2-methyl-5-(phosphooxymethyl)pyrimidine + CO + 5'-deoxyadenosine + formate + L-methionine + 3 H(+). It functions in the pathway cofactor biosynthesis; thiamine diphosphate biosynthesis. Catalyzes the synthesis of the hydroxymethylpyrimidine phosphate (HMP-P) moiety of thiamine from aminoimidazole ribotide (AIR) in a radical S-adenosyl-L-methionine (SAM)-dependent reaction. The polypeptide is Phosphomethylpyrimidine synthase (Mycobacterium leprae (strain Br4923)).